A 192-amino-acid polypeptide reads, in one-letter code: dTTP/UTP pyrophosphatase (192 aa).

Residue Asp-65 is the Proton acceptor of the active site.

It belongs to the Maf family. YhdE subfamily. A divalent metal cation is required as a cofactor.

The protein resides in the cytoplasm. The catalysed reaction is dTTP + H2O = dTMP + diphosphate + H(+). It carries out the reaction UTP + H2O = UMP + diphosphate + H(+). Nucleoside triphosphate pyrophosphatase that hydrolyzes dTTP and UTP. May have a dual role in cell division arrest and in preventing the incorporation of modified nucleotides into cellular nucleic acids. In Fusobacterium nucleatum subsp. nucleatum (strain ATCC 25586 / DSM 15643 / BCRC 10681 / CIP 101130 / JCM 8532 / KCTC 2640 / LMG 13131 / VPI 4355), this protein is dTTP/UTP pyrophosphatase.